A 230-amino-acid polypeptide reads, in one-letter code: Endonuclease NucS (230 aa).

This sequence belongs to the NucS endonuclease family.

The protein resides in the cytoplasm. In terms of biological role, cleaves both 3' and 5' ssDNA extremities of branched DNA structures. This Corynebacterium aurimucosum (strain ATCC 700975 / DSM 44827 / CIP 107346 / CN-1) (Corynebacterium nigricans) protein is Endonuclease NucS.